A 220-amino-acid polypeptide reads, in one-letter code: Redox-sensing transcriptional repressor Rex (220 aa).

The H-T-H motif DNA-binding region spans 25–64 (WYLSNVKLLKQRGERFVSSTQISKEINIDASQIAKDLSYV). Residue 99–104 (GVGSLG) participates in NAD(+) binding.

It belongs to the transcriptional regulatory Rex family. In terms of assembly, homodimer.

It is found in the cytoplasm. In terms of biological role, modulates transcription in response to changes in cellular NADH/NAD(+) redox state. This chain is Redox-sensing transcriptional repressor Rex, found in Bacteroides thetaiotaomicron (strain ATCC 29148 / DSM 2079 / JCM 5827 / CCUG 10774 / NCTC 10582 / VPI-5482 / E50).